A 462-amino-acid polypeptide reads, in one-letter code: tRNA(Ile)-lysidine synthase (462 aa).

31-36 (SGGRDS) contacts ATP.

It belongs to the tRNA(Ile)-lysidine synthase family.

The protein localises to the cytoplasm. The catalysed reaction is cytidine(34) in tRNA(Ile2) + L-lysine + ATP = lysidine(34) in tRNA(Ile2) + AMP + diphosphate + H(+). Functionally, ligates lysine onto the cytidine present at position 34 of the AUA codon-specific tRNA(Ile) that contains the anticodon CAU, in an ATP-dependent manner. Cytidine is converted to lysidine, thus changing the amino acid specificity of the tRNA from methionine to isoleucine. The protein is tRNA(Ile)-lysidine synthase of Ralstonia nicotianae (strain ATCC BAA-1114 / GMI1000) (Ralstonia solanacearum).